The primary structure comprises 31 residues: Cycloviolacin-O25 (31 aa).

The segment at residues Asp1–Asn31 is a cross-link (cyclopeptide (Asp-Asn)). Intrachain disulfides connect Cys4/Cys21, Cys8/Cys23, and Cys13/Cys28.

Post-translationally, this is a cyclic peptide. Expressed in roots and runners but not in leaves, petals and petioles (at protein level).

Probably participates in a plant defense mechanism. In Viola odorata (Sweet violet), this protein is Cycloviolacin-O25.